A 662-amino-acid chain; its full sequence is Protein Aster-C (662 aa).

Positions 1-34 (MEGAPTVRQVMNEGDSSLATELQEDVEENPSPTV) are disordered. Positions 69–136 (EEYRRQFTHL…KNITFMTKEK (68 aa)) constitute a GRAM domain. 2 disordered regions span residues 212-237 (SIED…EKLS) and 250-284 (VSET…LPTL). Basic and acidic residues predominate over residues 265 to 276 (LGKEESQNEKQT). Residues 326-497 (HGRLFINRIF…DLLIEESILN (172 aa)) enclose the VASt domain. The helical transmembrane segment at 557-577 (LIVVMSIFVLLLVLLNVTLFL) threads the bilayer.

It localises to the endoplasmic reticulum membrane. Its subcellular location is the cell membrane. Its function is as follows. Cholesterol transporter that mediates non-vesicular transport of cholesterol from the plasma membrane (PM) to the endoplasmic reticulum (ER). Contains unique domains for binding cholesterol and the PM, thereby serving as a molecular bridge for the transfer of cholesterol from the PM to the ER. Plays a crucial role in cholesterol homeostasis and has the unique ability to localize to the PM based on the level of membrane cholesterol. In lipid-poor conditions localizes to the ER membrane and in response to excess cholesterol in the PM is recruited to the endoplasmic reticulum-plasma membrane contact sites (EPCS) which is mediated by the GRAM domain. At the EPCS, the sterol-binding VASt/ASTER domain binds to the cholesterol in the PM and facilitates its transfer from the PM to ER. The protein is Protein Aster-C (GRAMD1C) of Pongo abelii (Sumatran orangutan).